The chain runs to 566 residues: MEGFDTMALPYLASPLSLGNMQGTDYLNALQGMDLPDQRSNFDSETFVSGDDLTFAHLSPQTLKRFSSGYEDSFPEMVTSFDPPPPAEPPADSSIDHNNKLLSFSMPVYPWTLLDYSFRRASISISAQLHGMFFLAESPWTTSPTENAPPQQGAELTCYRRNLFQITGSVTLPRALRYIITDTGDRIPIVAHELTVSATESVEGNSVKIISVPWKTPAANDAGKDTGNSSNTAAKVEKEPPAIPLDMLTGQDLDADYATFPIAWKRLQFRVATANNGRRKELQQHFVVRLRVVATLSTGMKTPICEVHSGPVIVRGRSPRNFQSRKDLPLSGSAAASRKNAQAAAASNNLTRTSPSLTDKAKTVVKSSSPETSSNGVPQQSPPNWALATNSTLPPPTTTTLPHSSVYSQSSPEFSRPVEAHRRTTSAIAAPINLSLLDDDSLNLSNGDSRPHTSFSNDLASKSLSVDSGRPVKMRKVSHSMPQAQSRSTSATFLNTANFQQMLPVPFTSESADVLYEYFPLGLEDWQGPVDAVYRPHVVHHTNMPQMKYITARGQSKRYFAAEDVF.

The segment at residues 79-326 is a DNA-binding region (NDT80); it reads TSFDPPPPAE…RSPRNFQSRK (248 aa). Disordered regions lie at residues 314–422 and 448–470; these read VRGR…EAHR and DSRP…DSGR. The segment covering 333 to 349 has biased composition (low complexity); that stretch reads SAAASRKNAQAAAASNN. Polar residues-rich tracts occupy residues 365–391, 403–413, and 452–466; these read VKSS…ATNS, HSSVYSQSSPE, and HTSF…SLSV.

Its subcellular location is the nucleus. The protein resides in the cytoplasm. Its function is as follows. Transcription factor that acts as a positive regulator of nonrepressible acid phosphatase activity. Is a major regulator of responses to nitrogen and carbon starvation and is essential for the expression of genes involved in vegetative incompatibility (like pin-c, het-6, and tol). Vegetative incompatibility is a non-self-recognition system ubiquitous in filamentous fungi which results in programmed cell death. This is Protein pacG (pacG) from Emericella nidulans (strain FGSC A4 / ATCC 38163 / CBS 112.46 / NRRL 194 / M139) (Aspergillus nidulans).